The following is a 299-amino-acid chain: Protease HtpX homolog (299 aa).

2 helical membrane-spanning segments follow: residues 14–34 (ILVM…VGYL) and 39–59 (ATGG…IMVG). His-144 lines the Zn(2+) pocket. Glu-145 is an active-site residue. His-148 serves as a coordination point for Zn(2+). 2 helical membrane passes run 159-179 (IALA…NFMW) and 196-216 (VFAI…ATMV). Glu-225 contacts Zn(2+).

Belongs to the peptidase M48B family. The cofactor is Zn(2+).

It is found in the cell membrane. The sequence is that of Protease HtpX homolog from Limosilactobacillus fermentum (strain NBRC 3956 / LMG 18251) (Lactobacillus fermentum).